The primary structure comprises 442 residues: MNKTLYQKIYDSHIIHEEKNNTSILYIDLHLLHEVTSPQAFYSLRQKRRMVRQPKKTFATMDHNVSTHNRDINGSGSMAKIQMEQLRKNCDEFNISLYDINNPNQGIVHVIAPEKGMTLPGMTIVCGDSHTSTHGAFGALSFGIGTSEVEHVLATQTLKQQRFKNMKIEIIGQIPKFISAKDIILFIIGKXGSSIGSGYVVEFCGNVIETMSMEERMTICNMAIEMGAKSGLIAPDKTTYAYLKNKIYSPYGVFWEKSLDFWQTLKSDKDAFFDKIFTIDISNLAPQITWGTNPDQVISIDEKIPNYETFSSLTQRNLAKSACKYMGLKKESYLTNISIDKVFIGSXTNARIEDLRLAAKILKNKKISNNVQAIVVPGSGSVKRQAEREGLDKIFINAGFEWRLPGCSMCLGMNRDRLNVGERCASXSNRNFEGRQGRGGRT.

Residues residue 347, cysteine 407, and cysteine 410 each contribute to the [4Fe-4S] cluster site.

It belongs to the aconitase/IPM isomerase family. LeuC type 1 subfamily. In terms of assembly, heterodimer of LeuC and LeuD. It depends on [4Fe-4S] cluster as a cofactor.

It carries out the reaction (2R,3S)-3-isopropylmalate = (2S)-2-isopropylmalate. The protein operates within amino-acid biosynthesis; L-leucine biosynthesis; L-leucine from 3-methyl-2-oxobutanoate: step 2/4. In terms of biological role, catalyzes the isomerization between 2-isopropylmalate and 3-isopropylmalate, via the formation of 2-isopropylmaleate. The sequence is that of 3-isopropylmalate dehydratase large subunit from Buchnera aphidicola subsp. Macrosiphoniella ludovicianae.